The following is a 137-amino-acid chain: Small ribosomal subunit protein uS12 (137 aa).

The segment at 1-57 (MPTINQLIRKGRKSKGSKSNSPALNFGYNSYKKVQTNNSAPQKRGVATRVGTMTPKK) is disordered. The span at 32–41 (KKVQTNNSAP) shows a compositional bias: polar residues. Residue D102 is modified to 3-methylthioaspartic acid.

It belongs to the universal ribosomal protein uS12 family. In terms of assembly, part of the 30S ribosomal subunit. Contacts proteins S8 and S17. May interact with IF1 in the 30S initiation complex.

Its function is as follows. With S4 and S5 plays an important role in translational accuracy. Functionally, interacts with and stabilizes bases of the 16S rRNA that are involved in tRNA selection in the A site and with the mRNA backbone. Located at the interface of the 30S and 50S subunits, it traverses the body of the 30S subunit contacting proteins on the other side and probably holding the rRNA structure together. The combined cluster of proteins S8, S12 and S17 appears to hold together the shoulder and platform of the 30S subunit. This chain is Small ribosomal subunit protein uS12, found in Ligilactobacillus salivarius (strain UCC118) (Lactobacillus salivarius).